We begin with the raw amino-acid sequence, 368 residues long: Phospho-N-acetylmuramoyl-pentapeptide-transferase (368 aa).

9 consecutive transmembrane segments (helical) span residues 30–50 (AAAV…IKYL), 72–92 (LPTM…FLWA), 99–119 (VWLI…DDYM), 139–159 (VLLG…SVLL), 170–190 (LTID…TAVS), 201–221 (GLAS…AYLA), 238–258 (GGEI…FLWF), 264–286 (EIIM…ALLI), and 345–365 (KIVI…LMTL).

The protein belongs to the glycosyltransferase 4 family. MraY subfamily. Mg(2+) serves as cofactor.

It is found in the cell inner membrane. The catalysed reaction is UDP-N-acetyl-alpha-D-muramoyl-L-alanyl-gamma-D-glutamyl-meso-2,6-diaminopimeloyl-D-alanyl-D-alanine + di-trans,octa-cis-undecaprenyl phosphate = di-trans,octa-cis-undecaprenyl diphospho-N-acetyl-alpha-D-muramoyl-L-alanyl-D-glutamyl-meso-2,6-diaminopimeloyl-D-alanyl-D-alanine + UMP. It participates in cell wall biogenesis; peptidoglycan biosynthesis. Its function is as follows. Catalyzes the initial step of the lipid cycle reactions in the biosynthesis of the cell wall peptidoglycan: transfers peptidoglycan precursor phospho-MurNAc-pentapeptide from UDP-MurNAc-pentapeptide onto the lipid carrier undecaprenyl phosphate, yielding undecaprenyl-pyrophosphoryl-MurNAc-pentapeptide, known as lipid I. The chain is Phospho-N-acetylmuramoyl-pentapeptide-transferase from Chlorobium limicola (strain DSM 245 / NBRC 103803 / 6330).